A 354-amino-acid chain; its full sequence is 3'-5' exonuclease (354 aa).

A disordered region spans residues 1-120; that stretch reads MERYLTKMPI…PSPEKEKPEK (120 aa). The segment covering 13–50 has biased composition (basic and acidic residues); it reads KANEVPKKEAFAKKETPKVARKATKTDTPKELKDKENA. The segment covering 59–70 has biased composition (basic residues); it reads TKGRPGRPAAKR. A compositionally biased stretch (basic and acidic residues) spans 71-91; sequence KNLDTPDVKDEKIAMEEENPP. Phosphoserine is present on residues Ser104, Ser110, and Ser112. The region spanning 149-314 is the 3'-5' exonuclease domain; it reads WVEKQKDDVV…GQVIYRELER (166 aa). Residues Asp163, Glu165, and Asp301 each contribute to the Mg(2+) site.

It belongs to the WRNexo family.

The protein resides in the nucleus. Functionally, has exonuclease activity on both single-stranded and duplex templates bearing overhangs, but not blunt ended duplex DNA, and cleaves in a 3'-5' direction. Essential for the formation of DNA replication focal centers. Has an important role in maintaining genome stability. This chain is 3'-5' exonuclease, found in Drosophila sechellia (Fruit fly).